The primary structure comprises 186 residues: MKTAHEIRPGNVIMLDGSPWVVQKTETTRSGRNAAIVKMKLKNVLLDSSTETTFKGEDKMDDIILERLDCTYSYFADPMYVFMDAEYNQYDVEAGNLGDASAYIVDGMEEVCQVTFYEGKAISVELPTTIVREVTYTEPSARGDTSGKVMKPATVSGGATLSVADFVKTGDMIEIDTRTGEFKKRV.

It belongs to the elongation factor P family.

The protein resides in the cytoplasm. It participates in protein biosynthesis; polypeptide chain elongation. In terms of biological role, involved in peptide bond synthesis. Stimulates efficient translation and peptide-bond synthesis on native or reconstituted 70S ribosomes in vitro. Probably functions indirectly by altering the affinity of the ribosome for aminoacyl-tRNA, thus increasing their reactivity as acceptors for peptidyl transferase. The sequence is that of Elongation factor P from Shewanella woodyi (strain ATCC 51908 / MS32).